The primary structure comprises 222 residues: Ribonuclease S-3 (222 aa).

The first 22 residues, 1 to 22 (MFRLQLISAFFILLFSLSPVSA), serve as a signal peptide directing secretion. C38 and C44 are oxidised to a cystine. The N-linked (GlcNAc...) asparagine glycan is linked to N50. The Proton donor role is filled by H54. RNA contacts are provided by residues H54, 92 to 93 (QM), 109 to 110 (HE), and 113 to 114 (RH). 3 cysteine pairs are disulfide-bonded: C68/C117, C177/C210, and C193/C204. Residue E110 is part of the active site. The Proton acceptor role is filled by H114.

The protein belongs to the RNase T2 family.

It localises to the secreted. The protein localises to the extracellular space. The enzyme catalyses a ribonucleotidyl-ribonucleotide-RNA + H2O = a 3'-end 3'-phospho-ribonucleotide-RNA + a 5'-end dephospho-ribonucleoside-RNA + H(+). Self-incompatibility (SI) is the inherited ability of a flowering plant to prevent self-fertilization by discriminating between self and non-self pollen during pollination. In many species, self-incompatibility is controlled by the single, multiallelic locus S. This is Ribonuclease S-3 (S3) from Petunia hybrida (Petunia).